The sequence spans 88 residues: Long neurotoxin 20 (88 aa).

The signal sequence occupies residues Met1–Ser21. 5 disulfides stabilise this stretch: Cys24/Cys42, Cys35/Cys63, Cys48/Cys52, Cys67/Cys78, and Cys79/Cys84.

The protein belongs to the three-finger toxin family. Long-chain subfamily. Type II alpha-neurotoxin sub-subfamily. In terms of tissue distribution, expressed by the venom gland.

It is found in the secreted. Functionally, binds with high affinity to muscular (alpha-1/CHRNA1) and neuronal (alpha-7/CHRNA7) nicotinic acetylcholine receptor (nAChR) and inhibits acetylcholine from binding to the receptor, thereby impairing neuromuscular and neuronal transmission. The polypeptide is Long neurotoxin 20 (Drysdalia coronoides (White-lipped snake)).